The chain runs to 172 residues: Biogenesis of lysosome-related organelles complex 1 subunit 6 (172 aa).

The span at 1 to 10 (MSVPEPPPPD) shows a compositional bias: pro residues. 2 disordered regions span residues 1 to 37 (MSVP…PDEG) and 141 to 172 (QKRQ…AKRT). Positions 63-167 (DLQRSKRALQ…FEREKQLTAK (105 aa)) form a coiled coil. Residues 143 to 164 (RQREELEREQQREKEFEREKQL) show a composition bias toward basic and acidic residues.

The protein belongs to the BLOC1S6 family. In terms of assembly, octamer composed of one copy each BLOC1S1, BLOC1S2, BLOC1S3, BLOC1S4, BLOC1S5, BLOC1S6, DTNBP1/BLOC1S7 and SNAPIN/BLOC1S8. Interacts with SNAP47. Homodimer. Component of the biogenesis of lysosome-related organelles complex 1 (BLOC-1) composed of BLOC1S1, BLOC1S2, BLOC1S3, BLOC1S4, BLOC1S5, BLOC1S6, DTNBP1/BLOC1S7 and SNAPIN/BLOC1S8. Interacts with BLOC1S4, BLOC1S5, DTNBP1/BLOC1S7, F-actin, SNAP25 isoform 1 and STX12. In terms of processing, phosphorylated. As to expression, expressed in liver, kidney and spleen (at protein level). Ubiquitously expressed, with the highest expression levels observed in brain, heart, liver and kidney.

Its subcellular location is the cytoplasm. The protein localises to the membrane. Its function is as follows. Component of the BLOC-1 complex, a complex that is required for normal biogenesis of lysosome-related organelles (LRO), such as platelet dense granules and melanosomes. In concert with the AP-3 complex, the BLOC-1 complex is required to target membrane protein cargos into vesicles assembled at cell bodies for delivery into neurites and nerve terminals. The BLOC-1 complex, in association with SNARE proteins, is also proposed to be involved in neurite extension. May play a role in intracellular vesicle trafficking, particularly in the vesicle-docking and fusion process. This Mus musculus (Mouse) protein is Biogenesis of lysosome-related organelles complex 1 subunit 6 (Bloc1s6).